We begin with the raw amino-acid sequence, 518 residues long: Arginyl-tRNA--protein transferase 1 (518 aa).

S169 carries the post-translational modification Phosphoserine. Residues 175-203 form a disordered region; it reads EKLGSGEPSHSVKVHTVPKPGKGADLSKP.

The protein belongs to the R-transferase family. As to quaternary structure, monomer. Interacts with LIAT1; LIAT1 is not a substrate of ATE1, the interaction takes place in the cytoplasm and seems to increase ATE1 arginyltransferase activity.

Its subcellular location is the nucleus. The protein resides in the cytoplasm. The catalysed reaction is an N-terminal L-alpha-aminoacyl-[protein] + L-arginyl-tRNA(Arg) = an N-terminal L-arginyl-L-aminoacyl-[protein] + tRNA(Arg) + H(+). Functionally, involved in the post-translational conjugation of arginine to the N-terminal aspartate or glutamate of a protein. This arginylation is required for degradation of the protein via the ubiquitin pathway. Does not arginylate cysteine residues. The polypeptide is Arginyl-tRNA--protein transferase 1 (Homo sapiens (Human)).